The sequence spans 249 residues: Probable transcriptional regulatory protein Wbm0670 (249 aa).

This sequence belongs to the TACO1 family.

It is found in the cytoplasm. This chain is Probable transcriptional regulatory protein Wbm0670, found in Wolbachia sp. subsp. Brugia malayi (strain TRS).